The chain runs to 93 residues: Co-chaperonin GroES (93 aa).

It belongs to the GroES chaperonin family. As to quaternary structure, heptamer of 7 subunits arranged in a ring. Interacts with the chaperonin GroEL.

Its subcellular location is the cytoplasm. Together with the chaperonin GroEL, plays an essential role in assisting protein folding. The GroEL-GroES system forms a nano-cage that allows encapsulation of the non-native substrate proteins and provides a physical environment optimized to promote and accelerate protein folding. GroES binds to the apical surface of the GroEL ring, thereby capping the opening of the GroEL channel. This chain is Co-chaperonin GroES, found in Streptococcus intermedius.